The primary structure comprises 270 residues: Surfeit locus protein 4 homolog (270 aa).

6 consecutive transmembrane segments (helical) span residues 65–85 (FLAT…CGMV), 93–113 (IAVG…SILW), 115–135 (FQFL…LAEA), 178–198 (LSVW…LVVL), 206–226 (ALIL…WWTI), and 243–263 (TLSV…GVSM). The Di-lysine motif motif lies at 267 to 270 (KKKW).

Belongs to the SURF4 family.

Its subcellular location is the endoplasmic reticulum membrane. In terms of biological role, endoplasmic reticulum cargo receptor that mediates the export of lipoproteins by recruiting cargos into COPII vesicles to facilitate their secretion. This chain is Surfeit locus protein 4 homolog, found in Drosophila melanogaster (Fruit fly).